The chain runs to 197 residues: dITP/XTP pyrophosphatase (197 aa).

8–13 (TGNPGK) lines the substrate pocket. Glu40 and Asp69 together coordinate Mg(2+). The active-site Proton acceptor is the Asp69. Substrate-binding positions include Ser70, 154-157 (FGYD), Lys177, and 182-183 (HR).

The protein belongs to the HAM1 NTPase family. As to quaternary structure, homodimer. It depends on Mg(2+) as a cofactor.

It catalyses the reaction XTP + H2O = XMP + diphosphate + H(+). The enzyme catalyses dITP + H2O = dIMP + diphosphate + H(+). The catalysed reaction is ITP + H2O = IMP + diphosphate + H(+). Pyrophosphatase that catalyzes the hydrolysis of nucleoside triphosphates to their monophosphate derivatives, with a high preference for the non-canonical purine nucleotides XTP (xanthosine triphosphate), dITP (deoxyinosine triphosphate) and ITP. Seems to function as a house-cleaning enzyme that removes non-canonical purine nucleotides from the nucleotide pool, thus preventing their incorporation into DNA/RNA and avoiding chromosomal lesions. This chain is dITP/XTP pyrophosphatase, found in Photorhabdus laumondii subsp. laumondii (strain DSM 15139 / CIP 105565 / TT01) (Photorhabdus luminescens subsp. laumondii).